Reading from the N-terminus, the 481-residue chain is uncharacterized protein (481 aa).

11 helical membrane-spanning segments follow: residues 14–34 (LGFC…GIFL), 46–66 (FAPM…IVFA), 90–110 (IGIY…GVLA), 134–154 (FSVK…INLF), 167–187 (TVGK…IITT), 218–238 (FSSM…FESI), 258–278 (IAIF…MLLG), 303–323 (IIVV…SFGA), 377–397 (LAVI…IALA), 411–431 (AFTD…LAVS), and 446–466 (YFSI…AYLH).

This sequence belongs to the amino acid-polyamine-organocation (APC) superfamily.

It is found in the cell membrane. Functionally, probable amino-acid or metabolite transport protein. This is an uncharacterized protein from Mycobacterium tuberculosis (strain CDC 1551 / Oshkosh).